Consider the following 811-residue polypeptide: Receptor-like protein 52 (811 aa).

Residues 1-22 (MTFLPLLFIFFFLTSIPFPAFS) form the signal peptide. The Extracellular segment spans residues 23–770 (QYNDRSTLLN…EDEEEVMNWT (748 aa)). N-linked (GlcNAc...) asparagine glycans are attached at residues Asn-47, Asn-64, Asn-74, Asn-93, Asn-109, and Asn-124. LRR repeat units follow at residues 62 to 86 (AGNV…ICNF), 87 to 110 (PNLK…LYNC), 112 to 134 (KLQY…INRL), 135 to 159 (APKL…IGRI), 161 to 183 (KLKV…IGDL), and 184 to 208 (SELE…EFGK). The stretch at 211–233 (KLKYMWLEEMNLIGEISAVVFEN) is one LRR 7; degenerate repeat. Residues Asn-233, Asn-246, Asn-260, Asn-295, and Asn-304 are each glycosylated (N-linked (GlcNAc...) asparagine). LRR repeat units follow at residues 234–258 (MTDL…LFGL), 260–281 (NLTE…SISA), 282–305 (KNLV…IGNL), 307–329 (NLEL…IGKL), 330–354 (PELK…GFIS), 356–377 (LERF…LCHG), 379–401 (KLQS…LGDC), and 403–427 (TLSS…TRSN). N-linked (GlcNAc...) asparagine glycans are attached at residues Asn-389, Asn-422, Asn-429, Asn-455, Asn-464, and Asn-485. LRR repeat units follow at residues 441-465 (LHSL…IANL), 466-489 (STLE…ISTS), 491-511 (KSID…LVRI), 512-537 (SSLE…SMQQ), 539-557 (QVLV…QNGF), 558-581 (SKLR…FFVN), 625-649 (LNTF…VGLL), 650-673 (KELH…MGNL), 674-697 (IELE…LGKL), and 699-722 (YLAY…QFQT). A glycan (N-linked (GlcNAc...) asparagine) is linked at Asn-525. Asn-571 and Asn-581 each carry an N-linked (GlcNAc...) asparagine glycan. An N-linked (GlcNAc...) asparagine glycan is attached at Asn-656. Asn-704 is a glycosylation site (N-linked (GlcNAc...) asparagine). A helical transmembrane segment spans residues 771–791 (AAAIGSIPGISIGLTMGYILV). At 792-811 (SYKPEWLMNSGRNKRRIKPI) the chain is on the cytoplasmic side.

The protein belongs to the RLP family.

Its subcellular location is the cell membrane. Functionally, required for defense against powdery mildew pathogen. In Arabidopsis thaliana (Mouse-ear cress), this protein is Receptor-like protein 52.